We begin with the raw amino-acid sequence, 259 residues long: Probable ABC transporter permease protein RF_0080 (259 aa).

5 consecutive transmembrane segments (helical) span residues 13-35 (TIKF…SSII), 49-69 (LFIG…SGAV), 148-168 (VIAA…IGVM), 195-215 (PIDV…ISII), and 237-257 (AVVN…ELFF).

The protein belongs to the MlaE permease family.

The protein localises to the cell inner membrane. Its function is as follows. Could be part of an ABC transporter complex. The chain is Probable ABC transporter permease protein RF_0080 from Rickettsia felis (strain ATCC VR-1525 / URRWXCal2) (Rickettsia azadi).